The sequence spans 357 residues: 3-isopropylmalate dehydrogenase (357 aa).

76-89 (GPQWDTIDPALRPE) is a binding site for NAD(+). Residues Arg-96, Arg-106, Arg-134, and Asp-224 each contribute to the substrate site. Positions 224, 248, and 252 each coordinate Mg(2+). 282 to 294 (GSAPDIAGQGVAN) is a binding site for NAD(+).

It belongs to the isocitrate and isopropylmalate dehydrogenases family. LeuB type 1 subfamily. As to quaternary structure, homodimer. Mg(2+) is required as a cofactor. It depends on Mn(2+) as a cofactor.

The protein localises to the cytoplasm. The catalysed reaction is (2R,3S)-3-isopropylmalate + NAD(+) = 4-methyl-2-oxopentanoate + CO2 + NADH. Its pathway is amino-acid biosynthesis; L-leucine biosynthesis; L-leucine from 3-methyl-2-oxobutanoate: step 3/4. Functionally, catalyzes the oxidation of 3-carboxy-2-hydroxy-4-methylpentanoate (3-isopropylmalate) to 3-carboxy-4-methyl-2-oxopentanoate. The product decarboxylates to 4-methyl-2 oxopentanoate. In Xylella fastidiosa (strain Temecula1 / ATCC 700964), this protein is 3-isopropylmalate dehydrogenase.